The sequence spans 85 residues: Large ribosomal subunit protein bL27 (85 aa).

Positions 1-22 (MAHKKAGGSSRNGRDSESKRLG) are disordered.

This sequence belongs to the bacterial ribosomal protein bL27 family.

This is Large ribosomal subunit protein bL27 from Tolumonas auensis (strain DSM 9187 / NBRC 110442 / TA 4).